Consider the following 518-residue polypeptide: Equilibrative nucleoside transporter 4 (518 aa).

The span at methionine 1–lysine 10 shows a compositional bias: basic and acidic residues. The segment at methionine 1–asparagine 21 is disordered. The Extracellular segment spans residues methionine 1–histidine 66. A helical transmembrane segment spans residues glycine 67–isoleucine 87. Over threonine 88–glycine 99 the chain is Cytoplasmic. Residues threonine 100–leucine 120 traverse the membrane as a helical segment. At asparagine 121–arginine 133 the chain is on the extracellular side. Residues isoleucine 134 to tryptophan 154 form a helical membrane-spanning segment. Topologically, residues leucine 155–arginine 157 are cytoplasmic. Residues phenylalanine 158–cysteine 178 form a helical membrane-spanning segment. At threonine 179–glutamine 198 the chain is on the extracellular side. A helical transmembrane segment spans residues glycine 199–threonine 218. The Cytoplasmic portion of the chain corresponds to lysine 219–threonine 229. Residues isoleucine 230–valine 250 traverse the membrane as a helical segment. The Extracellular segment spans residues arginine 251–arginine 342. Residues valine 343–proline 363 form a helical membrane-spanning segment. Residues glycine 364 to glutamate 376 are Cytoplasmic-facing. A helical membrane pass occupies residues tryptophan 377–alanine 397. The Extracellular segment spans residues alanine 398–arginine 407. Residues leucine 408–proline 428 form a helical membrane-spanning segment. Topologically, residues alanine 429–tryptophan 439 are cytoplasmic. The helical transmembrane segment at proline 440–isoleucine 460 threads the bilayer. Residues histidine 461–asparagine 476 are Extracellular-facing. Residues isoleucine 477–tyrosine 497 traverse the membrane as a helical segment. At serine 498 to tyrosine 518 the chain is on the cytoplasmic side.

The protein belongs to the SLC29A/ENT transporter (TC 2.A.57) family.

The protein resides in the membrane. Functions as a polyspecific organic cation transporter, efficiently transporting many organic cations such as monoamine neurotransmitters 1-methyl-4-phenylpyridinium and biogenic amines including serotonin, dopamine, norepinephrine and epinephrine. May play a role in regulating central nervous system homeostasis of monoamine neurotransmitters. May be involved in luminal transport of organic cations in the kidney and seems to use luminal proton gradient to drive organic cation reabsorption. Does not seem to transport nucleoside and nucleoside analogs such as uridine, cytidine, thymidine, adenosine, inosine, guanosine, and azidothymidine. This chain is Equilibrative nucleoside transporter 4 (slc29a4), found in Danio rerio (Zebrafish).